The sequence spans 315 residues: ATP synthase gamma chain (315 aa).

Belongs to the ATPase gamma chain family. F-type ATPases have 2 components, CF(1) - the catalytic core - and CF(0) - the membrane proton channel. CF(1) has five subunits: alpha(3), beta(3), gamma(1), delta(1), epsilon(1). CF(0) has three main subunits: a, b and c.

The protein resides in the cellular thylakoid membrane. Its function is as follows. Produces ATP from ADP in the presence of a proton gradient across the membrane. The gamma chain is believed to be important in regulating ATPase activity and the flow of protons through the CF(0) complex. This chain is ATP synthase gamma chain, found in Nostoc punctiforme (strain ATCC 29133 / PCC 73102).